Reading from the N-terminus, the 136-residue chain is Transport protein particle 20 kDa subunit (136 aa).

The protein belongs to the TRAPP small subunits family. Sedlin subfamily.

The protein localises to the cytoplasm. Its subcellular location is the golgi apparatus. It is found in the cis-Golgi network. The protein resides in the endoplasmic reticulum. In terms of biological role, component of the TRAPP I and TRAPP II complexes. TRAPP I plays a key role in the late stages of endoplasmic reticulum to Golgi traffic. TRAPP II seems to play a role in intra-Golgi transport. This chain is Transport protein particle 20 kDa subunit (trs20), found in Schizosaccharomyces pombe (strain 972 / ATCC 24843) (Fission yeast).